A 48-amino-acid polypeptide reads, in one-letter code: Delta-stichotoxin-Hcr1a (48 aa).

Disulfide bonds link Cys-3/Cys-43, Cys-5/Cys-33, and Cys-26/Cys-44. Lys-48 carries the post-translational modification Lysine amide; partial; in Delta-stichotoxin-Hcr1f.

The protein belongs to the sea anemone sodium channel inhibitory toxin family. Type II subfamily. In terms of assembly, probably composed of two peptide chains of 12 and 35 residues connected by two disulfide bonds (Cys-3-Cys-43 and Cys-5-Cys-33). Post-translationally, delta-SHTX-Hcr1f (RTX-VI) may be the result of post-translational modification of delta-SHTX-Hcr1a (RTX-III), which would consist of Arg-13 cleavage.

It localises to the secreted. The protein resides in the nematocyst. Functionally, binds to site 3 of voltage-gated sodium channels and inhibits the inactivation process. Specifically inhibits mammalian Nav1.3/SCN3A and Nav1.6/SCN8A sodium channels, as well as insect BgNav1 and VdNav1 sodium channels. Its function is as follows. Binds to site 3 of voltage-gated sodium channels and inhibits the inactivation process. Specifically inhibits mammalian Nav1.2/SCN3A (low inhibition) and Nav1.6/SCN8A sodium channels, as well as insect BgNav1 and VdNav1 sodium channels. The chain is Delta-stichotoxin-Hcr1a from Radianthus crispa (Leathery sea anemone).